The sequence spans 335 residues: GTPase Obg (335 aa).

The 159-residue stretch at 1–159 (MKFVDSASIR…REIGLELSIM (159 aa)) folds into the Obg domain. An OBG-type G domain is found at 160–332 (ADIGLLGMPN…LVAGLFKLVK (173 aa)). Residues 166–173 (GMPNAGKS), 191–195 (FTTLH), 212–215 (DIPG), 282–285 (NKMD), and 313–315 (SAL) contribute to the GTP site. Mg(2+) contacts are provided by Ser173 and Thr193.

The protein belongs to the TRAFAC class OBG-HflX-like GTPase superfamily. OBG GTPase family. Monomer. Mg(2+) is required as a cofactor.

The protein resides in the cytoplasm. Its function is as follows. An essential GTPase which binds GTP, GDP and possibly (p)ppGpp with moderate affinity, with high nucleotide exchange rates and a fairly low GTP hydrolysis rate. Plays a role in control of the cell cycle, stress response, ribosome biogenesis and in those bacteria that undergo differentiation, in morphogenesis control. The sequence is that of GTPase Obg from Ruthia magnifica subsp. Calyptogena magnifica.